A 259-amino-acid chain; its full sequence is Ribonuclease HII (259 aa).

Positions 70-258 (TLIAGIDEVG…VKSLVLGKKE (189 aa)) constitute an RNase H type-2 domain. Residues D76, E77, and D168 each coordinate a divalent metal cation.

Belongs to the RNase HII family. It depends on Mn(2+) as a cofactor. The cofactor is Mg(2+).

It is found in the cytoplasm. It catalyses the reaction Endonucleolytic cleavage to 5'-phosphomonoester.. Functionally, endonuclease that specifically degrades the RNA of RNA-DNA hybrids. The sequence is that of Ribonuclease HII from Streptococcus pneumoniae serotype 4 (strain ATCC BAA-334 / TIGR4).